We begin with the raw amino-acid sequence, 208 residues long: Small ribosomal subunit protein uS4 (208 aa).

An S4 RNA-binding domain is found at 98–161 (QRLDNVVYRM…KTNSQILRAI (64 aa)).

It belongs to the universal ribosomal protein uS4 family. In terms of assembly, part of the 30S ribosomal subunit. Contacts protein S5. The interaction surface between S4 and S5 is involved in control of translational fidelity.

In terms of biological role, one of the primary rRNA binding proteins, it binds directly to 16S rRNA where it nucleates assembly of the body of the 30S subunit. Functionally, with S5 and S12 plays an important role in translational accuracy. The sequence is that of Small ribosomal subunit protein uS4 from Sulfurovum sp. (strain NBC37-1).